The primary structure comprises 414 residues: MSGIIATYLIHDDSHNLEKKAEQIALGLTIGSWTHLPHLLQEQLKQHKGNVIHVEELAEHEHTNSYLRKKVKRGIIKIEYPLLNFSPDLPAILTTTFGKLSLDGEVKLIDLTFSDELKKHFPGPKFGIDGIRNLLQVHDRPLLMSIFKGMIGRNIGYLKTQLRDQAIGGVDIVKDDEILFENALTPLTKRIVSGKEVLQSVYETYGHKTLYAVNLTGRTFDLKENAKRAVQAGADILLFNVFSYGLDVLQSLAEDDEIPVPIMAHPAVSGAYSASKLYGVSSPLLLGKLLRYAGADFSLFPSPYGSVALEKEEALAISKYLTEDDAFFKKSFSVPSAGIHPGFVPFIARDFGKDVVINAGGGIHGHPNGAQGGGKAFRAAIDATLQNKPLHEVDDINLHSALQIWGNPSHEVKL.

Residue Lys-99 is the Proton acceptor of the active site. Residues Lys-148, 174–177, His-265, Gly-338, and 360–361 contribute to the substrate site; these read KDDE and GG. Residues Lys-174, Asp-176, and Glu-177 each contribute to the Mg(2+) site. Lys-174 is modified (N6-carboxylysine).

Belongs to the RuBisCO large chain family. Type IV subfamily. Homodimer. The cofactor is Mg(2+).

It catalyses the reaction 5-methylsulfanyl-2,3-dioxopentyl phosphate = 2-hydroxy-5-methylsulfanyl-3-oxopent-1-enyl phosphate. It functions in the pathway amino-acid biosynthesis; L-methionine biosynthesis via salvage pathway; L-methionine from S-methyl-5-thio-alpha-D-ribose 1-phosphate: step 3/6. Functionally, catalyzes the enolization of 2,3-diketo-5-methylthiopentyl-1-phosphate (DK-MTP-1-P) into 2-hydroxy-3-keto-5-methylthiopentenyl-1-phosphate (HK-MTPenyl-1-P). The protein is 2,3-diketo-5-methylthiopentyl-1-phosphate enolase of Bacillus cereus (strain Q1).